The sequence spans 410 residues: Arginine biosynthesis bifunctional protein ArgJ (410 aa).

6 residues coordinate substrate: Thr160, Lys186, Thr197, Glu283, Asn405, and Thr410. Thr197 serves as the catalytic Nucleophile.

Belongs to the ArgJ family. As to quaternary structure, heterotetramer of two alpha and two beta chains.

It is found in the cytoplasm. The enzyme catalyses N(2)-acetyl-L-ornithine + L-glutamate = N-acetyl-L-glutamate + L-ornithine. It carries out the reaction L-glutamate + acetyl-CoA = N-acetyl-L-glutamate + CoA + H(+). The protein operates within amino-acid biosynthesis; L-arginine biosynthesis; L-ornithine and N-acetyl-L-glutamate from L-glutamate and N(2)-acetyl-L-ornithine (cyclic): step 1/1. Its pathway is amino-acid biosynthesis; L-arginine biosynthesis; N(2)-acetyl-L-ornithine from L-glutamate: step 1/4. Its function is as follows. Catalyzes two activities which are involved in the cyclic version of arginine biosynthesis: the synthesis of N-acetylglutamate from glutamate and acetyl-CoA as the acetyl donor, and of ornithine by transacetylation between N(2)-acetylornithine and glutamate. The polypeptide is Arginine biosynthesis bifunctional protein ArgJ (Geobacillus kaustophilus (strain HTA426)).